The primary structure comprises 144 residues: Peptidyl-Asp metalloendopeptidase (144 aa).

His64 contacts Zn(2+). Glu65 is a catalytic residue. A Zn(2+)-binding site is contributed by His68.

It belongs to the peptidase M72 family. Zn(2+) serves as cofactor.

It carries out the reaction Cleavage of Xaa-|-Asp, Xaa-|-Glu and Xaa-|-cysteic acid bonds.. Metalloprotease, specifically cleaves on the N-terminal side of aspartyl, glutamyl and cysteic acid residues. This is Peptidyl-Asp metalloendopeptidase from Pseudomonas fragi.